A 380-amino-acid polypeptide reads, in one-letter code: Cytochrome b (380 aa).

Transmembrane regions (helical) follow at residues 34–54, 78–99, 114–134, and 179–199; these read FGSLLGICLLTQILTGLLLAA, WLLRNLHANGASFFFICIYLHI, WNTGVVLLLTLMATAFVGYVL, and FFALHFLLPFMIAGLTLIHLT. The heme b site is built by histidine 84 and histidine 98. Heme b-binding residues include histidine 183 and histidine 197. Histidine 202 is a binding site for a ubiquinone. Transmembrane regions (helical) follow at residues 227–247, 289–309, 321–341, and 348–368; these read LKDILGFMIMLLLLTTLALFH, LGGVLALAASVLILFLIPFLH, LSQLLFWLLVSNLFILTWIGS, and FIIIGQLASTTYFTIILVLFP.

This sequence belongs to the cytochrome b family. As to quaternary structure, the cytochrome bc1 complex contains 11 subunits: 3 respiratory subunits (MT-CYB, CYC1 and UQCRFS1), 2 core proteins (UQCRC1 and UQCRC2) and 6 low-molecular weight proteins (UQCRH/QCR6, UQCRB/QCR7, UQCRQ/QCR8, UQCR10/QCR9, UQCR11/QCR10 and a cleavage product of UQCRFS1). This cytochrome bc1 complex then forms a dimer. Heme b serves as cofactor.

The protein resides in the mitochondrion inner membrane. Functionally, component of the ubiquinol-cytochrome c reductase complex (complex III or cytochrome b-c1 complex) that is part of the mitochondrial respiratory chain. The b-c1 complex mediates electron transfer from ubiquinol to cytochrome c. Contributes to the generation of a proton gradient across the mitochondrial membrane that is then used for ATP synthesis. This Trogon curucui (Blue-crowned trogon) protein is Cytochrome b (MT-CYB).